A 352-amino-acid chain; its full sequence is Protein Wnt-4a (352 aa).

Positions 1 to 22 (MSSEYLIRSLLMLFLALFSANA) are cleaved as a signal peptide. Intrachain disulfides connect Cys-78/Cys-89, Cys-128/Cys-136, Cys-138/Cys-155, Cys-206/Cys-220, Cys-208/Cys-215, Cys-280/Cys-312, Cys-297/Cys-307, Cys-311/Cys-351, Cys-327/Cys-342, Cys-329/Cys-339, and Cys-334/Cys-335. Residue Asn-88 is glycosylated (N-linked (GlcNAc...) asparagine). Residue Ser-212 is the site of O-palmitoleoyl serine; by PORCN attachment. An N-linked (GlcNAc...) asparagine glycan is attached at Asn-298.

The protein belongs to the Wnt family. Post-translationally, palmitoleoylation is required for efficient binding to frizzled receptors. Depalmitoleoylation leads to Wnt signaling pathway inhibition. In terms of tissue distribution, caudal forebrain and neural keel, the floor plate, the gill slit and the developing pronephros.

The protein localises to the secreted. Its subcellular location is the extracellular space. It localises to the extracellular matrix. Functionally, ligand for members of the frizzled family of seven transmembrane receptors. Plays an important role in embryonic development. This chain is Protein Wnt-4a (wnt4a), found in Danio rerio (Zebrafish).